The following is a 509-amino-acid chain: ATP synthase subunit beta, mitochondrial (509 aa).

Residues 1–32 (MVLPRLIPRLSRSAFKVAQANNRVFNAPFRGM) constitute a mitochondrion transit peptide. 189–196 (GAGVGKTV) contacts ATP.

As to quaternary structure, F-type ATP synthases have 2 components, the catalytic core F(1) and the membrane-embedded component F(0), linked together by a central stalk and a peripheral stalk. The central stalk, also called rotor shaft, is often seen as part of F(1). The peripheral stalk is seen as part of F(0). F(0) contains the membrane channel next to the rotor. F-type ATP synthases form dimers but each monomer functions independently in ATP generation. The dimer consists of 17 different polypeptides: ATP1 (subunit alpha, 3 molecules per monomer, part of F(1)), ATP2 (subunit beta, 3 copies per monomer, part of F(1)), ATP3 (subunit gamma, part of the central stalk), ATP4 (subunit b, part of the peripheral stalk), ATP5/OSCP (subunit 5/OSCP, part of the peripheral stalk), ATP6 (subunit a, part of the peripheral stalk), ATP7 (subunit d, part of the peripheral stalk), ATP8 (subunit 8, part of the peripheral stalk), OLI1 (subunit c, part of the rotor, 10 molecules per monomer), ATP14 (subunit h, part of the peripheral stalk), ATP15 (subunit epsilon, part of the central stalk), ATP16 (subunit delta, part of the central stalk), ATP17 (subunit f, part of the peripheral stalk), ATP18 (subunit i/j, part of the peripheral stalk), ATP19 (subunit k, dimer-specific, at interface between monomers), ATP20 (subunit g, at interface between monomers), TIM11 (subunit e, at interface between monomers).

The protein resides in the mitochondrion inner membrane. It catalyses the reaction ATP + H2O + 4 H(+)(in) = ADP + phosphate + 5 H(+)(out). Mitochondrial membrane ATP synthase (F(1)F(0) ATP synthase or Complex V) produces ATP from ADP in the presence of a proton gradient across the membrane which is generated by electron transport complexes of the respiratory chain. F-type ATP synthases consist of two structural domains, F(1) - containing the extramembraneous catalytic core, and F(0) - containing the membrane proton channel, linked together by a central stalk and a peripheral stalk. During catalysis, ATP synthesis in the catalytic domain of F(1) is coupled via a rotary mechanism of the central stalk subunits to proton translocation. Subunits alpha/ATP1 and beta/ATP2 form the catalytic core in F(1). Rotation of the central stalk against the surrounding alpha/ATP1(3)beta/ATP2(3) subunits leads to hydrolysis of ATP in three separate catalytic sites on the beta/ATP2 subunits. This chain is ATP synthase subunit beta, mitochondrial, found in Yarrowia lipolytica (strain CLIB 122 / E 150) (Yeast).